Consider the following 454-residue polypeptide: uncharacterized protein (454 aa).

[4Fe-4S] cluster contacts are provided by Cys-73, Cys-79, Cys-82, and Cys-154. S-adenosyl-L-methionine is bound by residues Gln-279, Phe-307, Asp-328, and Asp-381. Cys-408 serves as the catalytic Nucleophile.

Belongs to the class I-like SAM-binding methyltransferase superfamily. RNA M5U methyltransferase family.

This is an uncharacterized protein from Leptospira interrogans serogroup Icterohaemorrhagiae serovar copenhageni (strain Fiocruz L1-130).